A 481-amino-acid chain; its full sequence is MITIEQLLDILKKDHNFREVLDADGYHYHYQGFSFERLSYDSRQVDGKTLFFAKGATFKADYLKEAITNGLQLYISEVDYELGIPVVLVTDIKKAMSLIAMVFYGNPQEKLKLLAFTGTKGKTTAAYFAYHMLKESYKPAMFSTMNTTLDGKTFFKSQLTTPESLDLFAMMAECVTNGMTHLIMEVSSQAYLVDRVYGLTFDVGVFLNISPDHIGPIEHPTFEDYFYHKRLLMENSRAVVINSGMDHFSFLADQVADQEHVFYGPLSDNQITTSQAFSFEAKGQLAGHYDIQLIGHFNQENAMAAGLACLRLGASLADIQKGIAKTRVPGRMEVLTMTNHAKVFVDYAHNGDSLEKLLSVVEEHQTGKLMLILGAPGNKGESRRADFGRVIHQHPNLTVILTADDPNFEDPEDISKEIASHIARPVEIISDREQAIQKAMSLCQGAKDAVIIAGKGADAYQIVKGQQVAYAGDLAIARHYL.

S42 contacts UDP-N-acetyl-alpha-D-muramoyl-L-alanyl-D-glutamate. 118–124 lines the ATP pocket; it reads GTKGKTT. Residues Q158, 160 to 161, S187, and R195 contribute to the UDP-N-acetyl-alpha-D-muramoyl-L-alanyl-D-glutamate site; that span reads TT. K229 is subject to N6-carboxylysine. Positions 404-407 match the L-lysine recognition motif motif; the sequence is DDPN.

Belongs to the MurCDEF family. MurE subfamily. In terms of processing, carboxylation is probably crucial for Mg(2+) binding and, consequently, for the gamma-phosphate positioning of ATP.

The protein localises to the cytoplasm. The enzyme catalyses UDP-N-acetyl-alpha-D-muramoyl-L-alanyl-D-glutamate + L-lysine + ATP = UDP-N-acetyl-alpha-D-muramoyl-L-alanyl-gamma-D-glutamyl-L-lysine + ADP + phosphate + H(+). Its pathway is cell wall biogenesis; peptidoglycan biosynthesis. Its function is as follows. Catalyzes the addition of L-lysine to the nucleotide precursor UDP-N-acetylmuramoyl-L-alanyl-D-glutamate (UMAG) in the biosynthesis of bacterial cell-wall peptidoglycan. This chain is UDP-N-acetylmuramoyl-L-alanyl-D-glutamate--L-lysine ligase, found in Streptococcus pyogenes serotype M28 (strain MGAS6180).